A 203-amino-acid chain; its full sequence is Large ribosomal subunit protein uL13 (203 aa).

Ala-2 is modified (N-acetylalanine). Arg-59 carries the citrulline modification. Residue Ser-77 is modified to Phosphoserine; by ZIPK/DAPK3. Arg-140 carries the citrulline modification. Residue Lys-191 is modified to N6-acetyllysine.

It belongs to the universal ribosomal protein uL13 family. As to quaternary structure, component of the 60S ribosome. Component of the GAIT complex. Interacts with EIF4G1. Phosphorylation at Ser-77 upon interferon-gamma treatment in monocytes involves a DAPK1-DAPK3 kinase cascade and is causing release from the ribosome, association with the GAIT complex and subsequent involvement in transcript-selective translation inhibition. In terms of processing, citrullinated by PADI4.

The protein resides in the cytoplasm. Associated with ribosomes but is not required for canonical ribosome function and has extra-ribosomal functions. Component of the GAIT (gamma interferon-activated inhibitor of translation) complex which mediates interferon-gamma-induced transcript-selective translation inhibition in inflammation processes. Upon interferon-gamma activation and subsequent phosphorylation dissociates from the ribosome and assembles into the GAIT complex which binds to stem loop-containing GAIT elements in the 3'-UTR of diverse inflammatory mRNAs (such as ceruplasmin) and suppresses their translation. In the GAIT complex interacts with m7G cap-bound eIF4G at or near the eIF3-binding site and blocks the recruitment of the 43S ribosomal complex. Involved in methylation of rRNA. The polypeptide is Large ribosomal subunit protein uL13 (RPL13A) (Homo sapiens (Human)).